A 677-amino-acid chain; its full sequence is UvrABC system protein B (677 aa).

The Helicase ATP-binding domain maps to 31–417; sequence DRIESGETDI…SDGVVEQIIR (387 aa). 44–51 is an ATP binding site; that stretch reads GATGTGKS. Positions 97–120 match the Beta-hairpin motif; that stretch reads YYDYYQPEAYVPKTDTFIEKDASV. The region spanning 434-596 is the Helicase C-terminal domain; that stretch reads QIDDLLEEIR…VTPVPIKKTV (163 aa). The 36-residue stretch at 629-664 folds into the UVR domain; that stretch reads KSHIKSLEAKMYMAAESLMFEEAAELRDEIQSLKEK.

The protein belongs to the UvrB family. As to quaternary structure, forms a heterotetramer with UvrA during the search for lesions. Interacts with UvrC in an incision complex.

It is found in the cytoplasm. Its function is as follows. The UvrABC repair system catalyzes the recognition and processing of DNA lesions. A damage recognition complex composed of 2 UvrA and 2 UvrB subunits scans DNA for abnormalities. Upon binding of the UvrA(2)B(2) complex to a putative damaged site, the DNA wraps around one UvrB monomer. DNA wrap is dependent on ATP binding by UvrB and probably causes local melting of the DNA helix, facilitating insertion of UvrB beta-hairpin between the DNA strands. Then UvrB probes one DNA strand for the presence of a lesion. If a lesion is found the UvrA subunits dissociate and the UvrB-DNA preincision complex is formed. This complex is subsequently bound by UvrC and the second UvrB is released. If no lesion is found, the DNA wraps around the other UvrB subunit that will check the other stand for damage. This chain is UvrABC system protein B, found in Tropheryma whipplei (strain TW08/27) (Whipple's bacillus).